Consider the following 504-residue polypeptide: 2,3-bisphosphoglycerate-independent phosphoglycerate mutase (504 aa).

Mn(2+) contacts are provided by Asp11 and Ser61. The active-site Phosphoserine intermediate is the Ser61. Residues His122, 152-153, Arg183, Arg189, 255-258, and Lys329 contribute to the substrate site; these read RD and RNDR. Residues Asp396, His400, Asp437, His438, and His455 each contribute to the Mn(2+) site.

It belongs to the BPG-independent phosphoglycerate mutase family. Monomer. It depends on Mn(2+) as a cofactor.

It catalyses the reaction (2R)-2-phosphoglycerate = (2R)-3-phosphoglycerate. The protein operates within carbohydrate degradation; glycolysis; pyruvate from D-glyceraldehyde 3-phosphate: step 3/5. Catalyzes the interconversion of 2-phosphoglycerate and 3-phosphoglycerate. The sequence is that of 2,3-bisphosphoglycerate-independent phosphoglycerate mutase from Bacteroides fragilis (strain ATCC 25285 / DSM 2151 / CCUG 4856 / JCM 11019 / LMG 10263 / NCTC 9343 / Onslow / VPI 2553 / EN-2).